The following is a 326-amino-acid chain: Light-induced protein, chloroplastic (326 aa).

Residues Met1 to Gln63 constitute a chloroplast transit peptide.

The protein belongs to the LIPC family. In terms of assembly, associates with the major light-harvesting antenna complex polypeptides of the PSII oxygen-evolving complex. In terms of tissue distribution, expressed in leaves.

The protein localises to the plastid. The protein resides in the chloroplast thylakoid membrane. Its function is as follows. Required for normal plant growth. May be both photoprotective and play an ancillary role in photosynthesis. May structurally stabilize thylakoids during osmotic and oxidative stress. The polypeptide is Light-induced protein, chloroplastic (Solanum tuberosum (Potato)).